Reading from the N-terminus, the 27-residue chain is NADH-ubiquinone oxidoreductase chain 1 (27 aa).

Residues 3–23 (LIFPLVGSLLLVICVMVGVAF) form a helical membrane-spanning segment.

The protein belongs to the complex I subunit 1 family.

Its subcellular location is the mitochondrion inner membrane. The enzyme catalyses a ubiquinone + NADH + 5 H(+)(in) = a ubiquinol + NAD(+) + 4 H(+)(out). Its function is as follows. Core subunit of the mitochondrial membrane respiratory chain NADH dehydrogenase (Complex I) that is believed to belong to the minimal assembly required for catalysis. Complex I functions in the transfer of electrons from NADH to the respiratory chain. The immediate electron acceptor for the enzyme is believed to be ubiquinone. The chain is NADH-ubiquinone oxidoreductase chain 1 (ND1) from Simulium vittatum (Striped black fly).